The primary structure comprises 475 residues: Beta-amyrin 28-monooxygenase (475 aa).

A helical membrane pass occupies residues 2–22 (YLTILFLFVSSILLSLMFLLR). Residue Cys422 participates in heme binding.

This sequence belongs to the cytochrome P450 family. Requires heme as cofactor.

It is found in the membrane. It catalyses the reaction beta-amyrin + 3 reduced [NADPH--hemoprotein reductase] + 3 O2 = oleanolate + 3 oxidized [NADPH--hemoprotein reductase] + 4 H2O + 4 H(+). In terms of biological role, catalyzes the oxidation of the methyl group to a carboxyl group at the C-28 position of beta-amyrin to form oleanolate. The sequence is that of Beta-amyrin 28-monooxygenase from Barbarea vulgaris (Yellow rocket).